We begin with the raw amino-acid sequence, 207 residues long: Probable GTP-binding protein EngB (207 aa).

One can recognise an EngB-type G domain in the interval 22–193; that stretch reads RVPEIVFAGR…LAHFDHYLSG (172 aa). GTP-binding positions include 30-37, 57-61, 75-78, 142-145, and 172-174; these read GRSNVGKS, GKTRL, DIPG, TKDD, and YSS. 2 residues coordinate Mg(2+): S37 and T59.

It belongs to the TRAFAC class TrmE-Era-EngA-EngB-Septin-like GTPase superfamily. EngB GTPase family. It depends on Mg(2+) as a cofactor.

In terms of biological role, necessary for normal cell division and for the maintenance of normal septation. The chain is Probable GTP-binding protein EngB from Chlorobium luteolum (strain DSM 273 / BCRC 81028 / 2530) (Pelodictyon luteolum).